The chain runs to 380 residues: Cytochrome b (380 aa).

Helical transmembrane passes span 34 to 54, 78 to 99, 114 to 134, and 179 to 199; these read FGSL…LLAM, WLIR…YLHI, WNTG…GYVL, and FFAL…IHLT. Heme b is bound by residues histidine 84 and histidine 98. Heme b-binding residues include histidine 183 and histidine 197. Residue histidine 202 participates in a ubiquinone binding. 4 helical membrane-spanning segments follow: residues 227–247, 289–309, 321–341, and 348–368; these read LKDT…ALFS, LGGV…PLLH, LSQL…WVGS, and FIII…ILLP.

This sequence belongs to the cytochrome b family. In terms of assembly, the cytochrome bc1 complex contains 11 subunits: 3 respiratory subunits (MT-CYB, CYC1 and UQCRFS1), 2 core proteins (UQCRC1 and UQCRC2) and 6 low-molecular weight proteins (UQCRH/QCR6, UQCRB/QCR7, UQCRQ/QCR8, UQCR10/QCR9, UQCR11/QCR10 and a cleavage product of UQCRFS1). This cytochrome bc1 complex then forms a dimer. Heme b is required as a cofactor.

It is found in the mitochondrion inner membrane. In terms of biological role, component of the ubiquinol-cytochrome c reductase complex (complex III or cytochrome b-c1 complex) that is part of the mitochondrial respiratory chain. The b-c1 complex mediates electron transfer from ubiquinol to cytochrome c. Contributes to the generation of a proton gradient across the mitochondrial membrane that is then used for ATP synthesis. The sequence is that of Cytochrome b (MT-CYB) from Fregetta tropica (Black-bellied storm-petrel).